The following is a 213-amino-acid chain: Superoxide dismutase [Fe] (213 aa).

Fe cation is bound by residues histidine 26, histidine 73, aspartate 156, and histidine 160.

Belongs to the iron/manganese superoxide dismutase family. In terms of assembly, homodimer. Requires Fe cation as cofactor.

It catalyses the reaction 2 superoxide + 2 H(+) = H2O2 + O2. Functionally, destroys superoxide anion radicals which are normally produced within the cells and which are toxic to biological systems. The sequence is that of Superoxide dismutase [Fe] (sodB) from Helicobacter pylori (strain ATCC 700392 / 26695) (Campylobacter pylori).